Reading from the N-terminus, the 195-residue chain is Probable GTP-binding protein EngB (195 aa).

The EngB-type G domain occupies 22 to 195 (GLPEIALAGR…WNAILAKINK (174 aa)). GTP contacts are provided by residues 30–37 (GRSNVGKS), 57–61 (GKTQT), 75–78 (DVPG), 142–145 (TKAD), and 174–176 (FSS). Mg(2+) is bound by residues S37 and T59.

The protein belongs to the TRAFAC class TrmE-Era-EngA-EngB-Septin-like GTPase superfamily. EngB GTPase family. It depends on Mg(2+) as a cofactor.

In terms of biological role, necessary for normal cell division and for the maintenance of normal septation. This is Probable GTP-binding protein EngB from Bacillus pumilus (strain SAFR-032).